A 458-amino-acid chain; its full sequence is UPF0210 protein MmarC5_0151 (458 aa).

It belongs to the UPF0210 family.

In Methanococcus maripaludis (strain C5 / ATCC BAA-1333), this protein is UPF0210 protein MmarC5_0151.